We begin with the raw amino-acid sequence, 370 residues long: GTPase Obg (370 aa).

An Obg domain is found at 1 to 159; the sequence is MKFIDEARIE…RMLRLELKVL (159 aa). Residues 127–146 form a disordered region; the sequence is NLHFKSSTNRAPRQKTDGKP. Positions 160–334 constitute an OBG-type G domain; the sequence is ADVGLLGMPN…LCYAIYDYLA (175 aa). GTP contacts are provided by residues 166-173, 191-195, 213-216, 284-287, and 315-317; these read GMPNAGKS, FTTLA, DIPG, NKLD, and SAL. S173 and T193 together coordinate Mg(2+). Residues 350-370 form a disordered region; that stretch reads ADVRFRDAPPSDGGATSGGDA.

It belongs to the TRAFAC class OBG-HflX-like GTPase superfamily. OBG GTPase family. Monomer. Mg(2+) serves as cofactor.

The protein resides in the cytoplasm. Its function is as follows. An essential GTPase which binds GTP, GDP and possibly (p)ppGpp with moderate affinity, with high nucleotide exchange rates and a fairly low GTP hydrolysis rate. Plays a role in control of the cell cycle, stress response, ribosome biogenesis and in those bacteria that undergo differentiation, in morphogenesis control. The sequence is that of GTPase Obg from Burkholderia vietnamiensis (strain G4 / LMG 22486) (Burkholderia cepacia (strain R1808)).